Here is a 1860-residue protein sequence, read N- to C-terminus: Golgi-specific brefeldin A-resistance guanine nucleotide exchange factor 1 (1860 aa).

Positions 1–211 (MVDKNIYIIQ…EPKNYVGTNM (211 aa)) are DCB; DCB:DCB domain and DCB:HUS domain interaction. Positions 1-381 (MVDKNIYIIQ…SVHDMDYVNP (381 aa)) are interaction with RAB1B. 2 disordered regions span residues 215–266 (KMRA…GGMP) and 281–372 (AASA…DSAS). Basic residues predominate over residues 227–241 (WKKQKRSPRPPRHMT). Polar residues-rich tracts occupy residues 250–262 (PTPN…SNLT), 290–301 (TDSGLEFSSQTT), and 335–351 (DLQQ…SASV). Phosphoserine occurs at positions 350 and 353. Residue threonine 508 is modified to Phosphothreonine. The tract at residues 531–551 (RIPSFVTELYINYDCDYYCSN) is HUS; DCB:HUS domain interaction. A compositionally biased stretch (basic and acidic residues) spans 620–631 (TREASNTERTAS). The disordered stretch occupies residues 620–666 (TREASNTERTASDGKAVGMASDIPGLHLPGGGRLPPEHGKSGCSDLE). Serine 663 carries the post-translational modification Phosphoserine. Residues 693-883 (ELIEIKNKKK…EDMYHAIKNE (191 aa)) enclose the SEC7 domain. The segment at 887–1371 (MPEEQTGLVR…PSRPGPSPLI (485 aa)) is phosphatidylinositol-phosphate binding; required for translocation to the leading edge and for ARF1 activation upon GPCR signaling. Over residues 1285–1297 (QATARADAPDAGA) the composition is skewed to low complexity. The segment at 1285–1336 (QATARADAPDAGAQSDSELPSYHQNDVSLDRGYTSDSEVYTDHGRPGKIHRS) is disordered. Residues 1298-1311 (QSDSELPSYHQNDV) show a composition bias toward polar residues. Serine 1299 is modified (phosphoserine). Residue tyrosine 1317 is modified to Phosphotyrosine. 3 positions are modified to phosphoserine: serine 1319, serine 1321, and serine 1336. At threonine 1338 the chain carries Phosphothreonine; by AMPK. 3 disordered regions span residues 1351–1371 (GKDD…SPLI), 1431–1484 (CKSQ…DEGV), and 1726–1809 (PMPM…QPPL). The span at 1433 to 1447 (SQEKRGKSHKYDSKG) shows a compositional bias: basic and acidic residues. The span at 1465–1474 (TSSQHASRGG) shows a compositional bias: polar residues. Residues serine 1476, serine 1774, and serine 1785 each carry the phosphoserine modification. The segment covering 1775–1792 (PRAASSSSPGSPVASSPS) has biased composition (low complexity).

As to quaternary structure, can form homodimers and probably homotetramers. Interacts with COPG1; the interaction is independent of ARF1 activation. Interacts with ARF1, ARF3, ARF4 and ARF5. Interacts with RAB1B (GTP-bound form); required for GBF1 membrane association. Interacts with GGA1, GGA2 and GGA3. Interacts with USO1. Interacts (via SEC7 domain) with PNPLA2 (via C-terminus); the interaction is direct. Interacts with ARMH3. In terms of assembly, (Microbial infection) Interacts with poliovirus protein 3A. AMPK-mediated phosphorylation at Thr-1338 is induced by 2-deoxyglucose (2-DG) and AICA ribonucleotide, and occurs during mitosis leading to membrane disassociation and inactivation of ARF1 during mitosis. As to expression, ubiquitous.

It is found in the golgi apparatus. Its subcellular location is the cis-Golgi network. The protein resides in the endoplasmic reticulum-Golgi intermediate compartment. The protein localises to the trans-Golgi network. It localises to the cytoplasm. It is found in the lipid droplet. Its subcellular location is the membrane. With respect to regulation, inhibited by brefeldin A (BFA). Inhibited by golgicide A (GCA). Guanine-nucleotide exchange factor (GEF) for members of the Arf family of small GTPases involved in trafficking in the early secretory pathway; its GEF activity initiates the coating of nascent vesicles via the localized generation of activated ARFs through replacement of GDP with GTP. Recruitment to cis-Golgi membranes requires membrane association of Arf-GDP and can be regulated by ARF1, ARF3, ARF4 and ARF5. Involved in the recruitment of the COPI coat complex to the endoplasmic reticulum exit sites (ERES), and the endoplasmic reticulum-Golgi intermediate (ERGIC) and cis-Golgi compartments which implicates ARF1 activation. Involved in COPI vesicle-dependent retrograde transport from the ERGIC and cis-Golgi compartments to the endoplasmic reticulum (ER). Involved in the trans-Golgi network recruitment of GGA1, GGA2, GGA3, BIG1, BIG2, and the AP-1 adaptor protein complex related to chlathrin-dependent transport; the function requires its GEF activity (probably at least in part on ARF4 and ARF5). Has GEF activity towards ARF1. Has in vitro GEF activity towards ARF5. Involved in the processing of PSAP. Required for the assembly of the Golgi apparatus. The AMPK-phosphorylated form is involved in Golgi disassembly during mitotis and under stress conditions. May be involved in the COPI vesicle-dependent recruitment of PNPLA2 to lipid droplets; however, this function is under debate. In neutrophils, involved in G protein-coupled receptor (GPCR)-mediated chemotaxis und superoxide production. Proposed to be recruited by phosphatidylinositol-phosphates generated upon GPCR stimulation to the leading edge where it recruits and activates ARF1, and is involved in recruitment of GIT2 and the NADPH oxidase complex. Plays a role in maintaining mitochondrial morphology. The protein is Golgi-specific brefeldin A-resistance guanine nucleotide exchange factor 1 (GBF1) of Homo sapiens (Human).